The sequence spans 671 residues: Major S-layer protein (671 aa).

The first 24 residues, 1–24 (MKRFAALSLAALMLLTVFASAASA), serve as a signal peptide directing secretion. 4 N-linked (GlcNAc...) asparagine glycosylation sites follow: asparagine 36, asparagine 70, asparagine 116, and asparagine 350. Residues 594–650 (GEEVSGEEETPEETPTGEVTETEGEEETPTEVTETPTEGEPAPEETETTESEGTTPG) are disordered. Over residues 613 to 622 (TETEGEEETP) the composition is skewed to acidic residues. Residues 623 to 633 (TEVTETPTEGE) are compositionally biased toward low complexity. Residues 634–643 (PAPEETETTE) show a composition bias toward acidic residues. A helical transmembrane segment spans residues 647–667 (TTPGFGFMFGLVGLLAVVYLV).

The protein belongs to the Methanosarcinales S-layer protein family. In terms of processing, glycosylated.

The protein localises to the secreted. The protein resides in the cell wall. Its subcellular location is the S-layer. It is found in the cell membrane. In terms of biological role, S-layer protein. The S-layer is a paracrystalline mono-layered assembly of proteins which coat the surface of the cell. This Methanosarcina acetivorans (strain ATCC 35395 / DSM 2834 / JCM 12185 / C2A) protein is Major S-layer protein.